A 228-amino-acid chain; its full sequence is Ribosomal RNA small subunit methyltransferase G (228 aa).

Residues glycine 89, leucine 94, 140–141 (VE), and arginine 159 each bind S-adenosyl-L-methionine.

The protein belongs to the methyltransferase superfamily. RNA methyltransferase RsmG family.

The protein localises to the cytoplasm. The enzyme catalyses guanosine(527) in 16S rRNA + S-adenosyl-L-methionine = N(7)-methylguanosine(527) in 16S rRNA + S-adenosyl-L-homocysteine. Its function is as follows. Specifically methylates the N7 position of guanine in position 527 of 16S rRNA. This Burkholderia lata (strain ATCC 17760 / DSM 23089 / LMG 22485 / NCIMB 9086 / R18194 / 383) protein is Ribosomal RNA small subunit methyltransferase G.